Consider the following 246-residue polypeptide: Acetoacetate decarboxylase (246 aa).

The active-site Schiff-base intermediate with acetoacetate is Lys115.

This sequence belongs to the ADC family.

The enzyme catalyses acetoacetate + H(+) = acetone + CO2. Functionally, catalyzes the conversion of acetoacetate to acetone and carbon dioxide. This Clostridium beijerinckii (strain ATCC 51743 / NCIMB 8052) (Clostridium acetobutylicum) protein is Acetoacetate decarboxylase.